The primary structure comprises 84 residues: U4-theraphotoxin-Hhn1a (84 aa).

An N-terminal signal peptide occupies residues 1–22; that stretch reads MKVTLIAILTCAAVLVLHTTAA. A propeptide spanning residues 23 to 47 is cleaved from the precursor; sequence EELEESQLMEVGMPDTELEAVDEER. Disulfide bonds link Cys51/Cys65, Cys55/Cys76, and Cys70/Cys81.

The protein belongs to the neurotoxin 12 (Hwtx-2) family. 02 (Hwtx-2) subfamily. Expressed by the venom gland.

The protein resides in the secreted. Postsynaptic neurotoxin. The sequence is that of U4-theraphotoxin-Hhn1a from Cyriopagopus hainanus (Chinese bird spider).